The primary structure comprises 102 residues: MGTASDAAALVTRLVRVRGRVQGIGYREACVRRARALGVTGWVRNRMDASVEAMLQGLPLQLEAMCAWLDEGMPAALVEGMEVIEVPAPFPRFDRFEQLPTL.

One can recognise an Acylphosphatase-like domain in the interval 12-100 (TRLVRVRGRV…PRFDRFEQLP (89 aa)). Catalysis depends on residues Arg27 and Asn45.

Belongs to the acylphosphatase family.

It carries out the reaction an acyl phosphate + H2O = a carboxylate + phosphate + H(+). This Ralstonia nicotianae (strain ATCC BAA-1114 / GMI1000) (Ralstonia solanacearum) protein is Acylphosphatase 1 (acyP1).